We begin with the raw amino-acid sequence, 404 residues long: Cysteine desulfurase IscS (404 aa).

Pyridoxal 5'-phosphate contacts are provided by residues 75–76 (AT), N155, Q183, and 203–205 (SAH). Position 206 is an N6-(pyridoxal phosphate)lysine (K206). T243 provides a ligand contact to pyridoxal 5'-phosphate. The Cysteine persulfide intermediate role is filled by C328. Position 328 (C328) interacts with [2Fe-2S] cluster.

The protein belongs to the class-V pyridoxal-phosphate-dependent aminotransferase family. NifS/IscS subfamily. As to quaternary structure, homodimer. Forms a heterotetramer with IscU, interacts with other sulfur acceptors. It depends on pyridoxal 5'-phosphate as a cofactor.

It is found in the cytoplasm. It carries out the reaction (sulfur carrier)-H + L-cysteine = (sulfur carrier)-SH + L-alanine. The protein operates within cofactor biosynthesis; iron-sulfur cluster biosynthesis. Its function is as follows. Master enzyme that delivers sulfur to a number of partners involved in Fe-S cluster assembly, tRNA modification or cofactor biosynthesis. Catalyzes the removal of elemental sulfur atoms from cysteine to produce alanine. Functions as a sulfur delivery protein for Fe-S cluster synthesis onto IscU, an Fe-S scaffold assembly protein, as well as other S acceptor proteins. The sequence is that of Cysteine desulfurase IscS from Azotobacter vinelandii (strain DJ / ATCC BAA-1303).